A 142-amino-acid chain; its full sequence is Large ribosomal subunit protein uL11 (142 aa).

The protein belongs to the universal ribosomal protein uL11 family. Part of the ribosomal stalk of the 50S ribosomal subunit. Interacts with L10 and the large rRNA to form the base of the stalk. L10 forms an elongated spine to which L12 dimers bind in a sequential fashion forming a multimeric L10(L12)X complex. In terms of processing, one or more lysine residues are methylated.

Functionally, forms part of the ribosomal stalk which helps the ribosome interact with GTP-bound translation factors. This Buchnera aphidicola subsp. Schizaphis graminum (strain Sg) protein is Large ribosomal subunit protein uL11.